Consider the following 305-residue polypeptide: Acetaldehyde dehydrogenase (305 aa).

S13–I16 contributes to the NAD(+) binding site. Catalysis depends on C128, which acts as the Acyl-thioester intermediate. NAD(+) contacts are provided by residues S159–N167 and N278.

This sequence belongs to the acetaldehyde dehydrogenase family.

The catalysed reaction is acetaldehyde + NAD(+) + CoA = acetyl-CoA + NADH + H(+). This Roseiflexus sp. (strain RS-1) protein is Acetaldehyde dehydrogenase.